Reading from the N-terminus, the 317-residue chain is Neuroguidin-A (317 aa).

Disordered regions lie at residues 125-170 (ENDP…SKVK) and 280-317 (SALT…RRRH). Positions 146-157 (DERESDSGEEGA) are enriched in acidic residues. Residues 297-317 (KKSKKGPKKSKKKKGFSRRRH) are compositionally biased toward basic residues.

It belongs to the SAS10 family. In terms of assembly, part of the small subunit (SSU) processome, composed of more than 70 proteins and the RNA chaperone small nucleolar RNA (snoRNA) U3.

The protein resides in the nucleus. It localises to the nucleolus. It is found in the chromosome. Its subcellular location is the centromere. The protein localises to the cytoplasm. The protein resides in the cell projection. It localises to the axon. It is found in the dendrite. Its subcellular location is the filopodium. Functionally, part of the small subunit (SSU) processome, first precursor of the small eukaryotic ribosomal subunit. During the assembly of the SSU processome in the nucleolus, many ribosome biogenesis factors, an RNA chaperone and ribosomal proteins associate with the nascent pre-rRNA and work in concert to generate RNA folding, modifications, rearrangements and cleavage as well as targeted degradation of pre-ribosomal RNA by the RNA exosome. Its dissociation from the complex determines the transition from state pre-A1 to state pre-A1*. May inhibit mRNA translation. In Xenopus laevis (African clawed frog), this protein is Neuroguidin-A (ngdn-a).